Reading from the N-terminus, the 353-residue chain is Inactive ADP-ribosyltransferase ARH2 (353 aa).

A Phosphoserine modification is found at S27.

The protein belongs to the ADP-ribosylglycohydrolase family. Expressed in the embryonic heart at E11.5.

The protein resides in the cytoplasm. Its subcellular location is the myofibril. It is found in the sarcomere. Required for myofibril assembly and outgrowth of the cardiac chambers in the developing heart. Appears to be catalytically inactive, showing no activity against O-acetyl-ADP-ribose. This Mus musculus (Mouse) protein is Inactive ADP-ribosyltransferase ARH2 (Adprhl1).